Reading from the N-terminus, the 274-residue chain is Large ribosomal subunit protein uL2 (274 aa).

The tract at residues 221–256 is disordered; that stretch reads RGTAMNPVDHPHGGGEGRNFGKHPVTPWGVPTKGYK.

It belongs to the universal ribosomal protein uL2 family. As to quaternary structure, part of the 50S ribosomal subunit. Forms a bridge to the 30S subunit in the 70S ribosome.

In terms of biological role, one of the primary rRNA binding proteins. Required for association of the 30S and 50S subunits to form the 70S ribosome, for tRNA binding and peptide bond formation. It has been suggested to have peptidyltransferase activity; this is somewhat controversial. Makes several contacts with the 16S rRNA in the 70S ribosome. This is Large ribosomal subunit protein uL2 from Thioalkalivibrio sulfidiphilus (strain HL-EbGR7).